The sequence spans 271 residues: MEHGSIITQARREDALVLTKQGLVSKSSPKKPRGRNIFKALFCCFRAQHVGQSSSSTELAAYKEEANTIAKSDLLQCLQYQFYQIPGTCLLPEVTEEDQGRICVVIDLDETLVHSSFKPINNADFIVPIEIEGTTHQVYVLKRPYVDEFLRRMGELFECVLFTASLAKYADPVTDLLDRCGVFRARLFRESCVFHQGCYVKDLSRLGRDLRKTLILDNSPASYIFHPENAVPVQSWFDDMADTELLNLIPIFEELSGAEDVYTSLGQLRAP.

Ser5 is modified (phosphoserine). The 159-residue stretch at 97 to 255 folds into the FCP1 homology domain; it reads EDQGRICVVI…LNLIPIFEEL (159 aa). Residue Asp107 is the 4-aspartylphosphate intermediate of the active site. Asp107, Asp109, and Asn218 together coordinate Mg(2+). Catalysis depends on Asp109, which acts as the Proton donor.

Monomer. Interacts with REST. It depends on Mg(2+) as a cofactor. Expression is restricted to non-neuronal tissues. Highest expression in pancreas and lowest in liver.

The protein resides in the nucleus. It carries out the reaction O-phospho-L-seryl-[protein] + H2O = L-seryl-[protein] + phosphate. It catalyses the reaction O-phospho-L-threonyl-[protein] + H2O = L-threonyl-[protein] + phosphate. In terms of biological role, preferentially catalyzes the dephosphorylation of 'Ser-5' within the tandem 7 residue repeats in the C-terminal domain (CTD) of the largest RNA polymerase II subunit POLR2A. Negatively regulates RNA polymerase II transcription, possibly by controlling the transition from initiation/capping to processive transcript elongation. Recruited by REST to neuronal genes that contain RE-1 elements, leading to neuronal gene silencing in non-neuronal cells. May contribute to the development of sarcomas. This Homo sapiens (Human) protein is Carboxy-terminal domain RNA polymerase II polypeptide A small phosphatase 2 (CTDSP2).